The chain runs to 140 residues: Chorion class A protein Ld2/Ld41 (140 aa).

The first 21 residues, 1–21 (MNSFALLLVCIQACLVQSVFS), serve as a signal peptide directing secretion.

Belongs to the chorion protein family.

In terms of biological role, this protein is one of many from the eggshell of the gypsy moth. The chain is Chorion class A protein Ld2/Ld41 from Lymantria dispar (Gypsy moth).